We begin with the raw amino-acid sequence, 287 residues long: ATP phosphoribosyltransferase (287 aa).

Belongs to the ATP phosphoribosyltransferase family. Long subfamily. Requires Mg(2+) as cofactor.

It is found in the cytoplasm. It catalyses the reaction 1-(5-phospho-beta-D-ribosyl)-ATP + diphosphate = 5-phospho-alpha-D-ribose 1-diphosphate + ATP. Its pathway is amino-acid biosynthesis; L-histidine biosynthesis; L-histidine from 5-phospho-alpha-D-ribose 1-diphosphate: step 1/9. Feedback inhibited by histidine. Its function is as follows. Catalyzes the condensation of ATP and 5-phosphoribose 1-diphosphate to form N'-(5'-phosphoribosyl)-ATP (PR-ATP). Has a crucial role in the pathway because the rate of histidine biosynthesis seems to be controlled primarily by regulation of HisG enzymatic activity. In Methanothermobacter thermautotrophicus (strain ATCC 29096 / DSM 1053 / JCM 10044 / NBRC 100330 / Delta H) (Methanobacterium thermoautotrophicum), this protein is ATP phosphoribosyltransferase (hisG).